We begin with the raw amino-acid sequence, 525 residues long: NAD(P)H-quinone oxidoreductase chain 4 1 (525 aa).

A run of 14 helical transmembrane segments spans residues 6–26, 36–56, 91–111, 115–135, 136–156, 169–189, 212–232, 243–263, 277–297, 314–334, 335–355, 375–397, 417–437, and 464–484; these read FPWL…IPII, WYAL…FYTS, LIIL…PVTL, LFYF…AVQD, LLLF…LLAI, FILY…TMAF, LLLY…IPLH, TAPA…YALI, FAPV…LTSF, MGFV…GAVL, QMVS…ATYD, IFAM…GFVA, VIVV…LLSM, and VFVI…PKLL.

It belongs to the complex I subunit 4 family.

The protein localises to the cellular thylakoid membrane. It carries out the reaction a plastoquinone + NADH + (n+1) H(+)(in) = a plastoquinol + NAD(+) + n H(+)(out). The enzyme catalyses a plastoquinone + NADPH + (n+1) H(+)(in) = a plastoquinol + NADP(+) + n H(+)(out). Functionally, NDH-1 shuttles electrons from NAD(P)H, via FMN and iron-sulfur (Fe-S) centers, to quinones in the respiratory chain. The immediate electron acceptor for the enzyme in this species is believed to be plastoquinone. Couples the redox reaction to proton translocation (for every two electrons transferred, four hydrogen ions are translocated across the cytoplasmic membrane), and thus conserves the redox energy in a proton gradient. In Trichormus variabilis (strain ATCC 29413 / PCC 7937) (Anabaena variabilis), this protein is NAD(P)H-quinone oxidoreductase chain 4 1.